A 226-amino-acid polypeptide reads, in one-letter code: ATP synthase F(0) complex subunit a (226 aa).

Transmembrane regions (helical) follow at residues 11–31 (SPELLMIPTALLSMLVPVLLI), 37–54 (LLGNRMTTAIAWLLMTIM), 72–92 (LTSLLLMILLSNLLGLLPYTF), 98–118 (LSMNMAMAIPLWMATIITGMT), 138–158 (IPFMIIIETISLLMRPLALGV), 178–198 (TLNFITSHITLSIMTYLLLFL), and 199–219 (LCILELAVACIQAYVFVLLII).

The protein belongs to the ATPase A chain family. Component of the ATP synthase complex composed at least of ATP5F1A/subunit alpha, ATP5F1B/subunit beta, ATP5MC1/subunit c (homooctomer), MT-ATP6/subunit a, MT-ATP8/subunit 8, ATP5ME/subunit e, ATP5MF/subunit f, ATP5MG/subunit g, ATP5MK/subunit k, ATP5MJ/subunit j, ATP5F1C/subunit gamma, ATP5F1D/subunit delta, ATP5F1E/subunit epsilon, ATP5PF/subunit F6, ATP5PB/subunit b, ATP5PD/subunit d, ATP5PO/subunit OSCP. ATP synthase complex consists of a soluble F(1) head domain (subunits alpha(3) and beta(3)) - the catalytic core - and a membrane F(0) domain - the membrane proton channel (subunits c, a, 8, e, f, g, k and j). These two domains are linked by a central stalk (subunits gamma, delta, and epsilon) rotating inside the F1 region and a stationary peripheral stalk (subunits F6, b, d, and OSCP). Interacts with DNAJC30; interaction is direct.

The protein resides in the mitochondrion inner membrane. It carries out the reaction H(+)(in) = H(+)(out). In terms of biological role, subunit a, of the mitochondrial membrane ATP synthase complex (F(1)F(0) ATP synthase or Complex V) that produces ATP from ADP in the presence of a proton gradient across the membrane which is generated by electron transport complexes of the respiratory chain. ATP synthase complex consist of a soluble F(1) head domain - the catalytic core - and a membrane F(1) domain - the membrane proton channel. These two domains are linked by a central stalk rotating inside the F(1) region and a stationary peripheral stalk. During catalysis, ATP synthesis in the catalytic domain of F(1) is coupled via a rotary mechanism of the central stalk subunits to proton translocation. With the subunit c (ATP5MC1), forms the proton-conducting channel in the F(0) domain, that contains two crucial half-channels (inlet and outlet) that facilitate proton movement from the mitochondrial intermembrane space (IMS) into the matrix. Protons are taken up via the inlet half-channel and released through the outlet half-channel, following a Grotthuss mechanism. The protein is ATP synthase F(0) complex subunit a of Lycodon semicarinatus (Ryukyu odd-tooth snake).